The following is an 863-amino-acid chain: DNA mismatch repair protein MutS 2 (863 aa).

626 to 633 is a binding site for ATP; sequence GPNMSGKS.

This sequence belongs to the DNA mismatch repair MutS family.

Its function is as follows. This protein is involved in the repair of mismatches in DNA. It is possible that it carries out the mismatch recognition step. This protein has a weak ATPase activity. The chain is DNA mismatch repair protein MutS 2 (mutS2) from Halobacterium salinarum (strain ATCC 700922 / JCM 11081 / NRC-1) (Halobacterium halobium).